Consider the following 439-residue polypeptide: 3-phosphoshikimate 1-carboxyvinyltransferase (439 aa).

3-phosphoshikimate-binding residues include Lys-27, Ser-28, and Arg-32. Lys-27 is a binding site for phosphoenolpyruvate. Positions 101 and 130 each coordinate phosphoenolpyruvate. Positions 175, 177, 326, and 353 each coordinate 3-phosphoshikimate. Position 177 (Gln-177) interacts with phosphoenolpyruvate. Asp-326 functions as the Proton acceptor in the catalytic mechanism. Positions 357 and 399 each coordinate phosphoenolpyruvate.

The protein belongs to the EPSP synthase family. In terms of assembly, monomer.

It localises to the cytoplasm. The catalysed reaction is 3-phosphoshikimate + phosphoenolpyruvate = 5-O-(1-carboxyvinyl)-3-phosphoshikimate + phosphate. It participates in metabolic intermediate biosynthesis; chorismate biosynthesis; chorismate from D-erythrose 4-phosphate and phosphoenolpyruvate: step 6/7. Its function is as follows. Catalyzes the transfer of the enolpyruvyl moiety of phosphoenolpyruvate (PEP) to the 5-hydroxyl of shikimate-3-phosphate (S3P) to produce enolpyruvyl shikimate-3-phosphate and inorganic phosphate. In Synechococcus sp. (strain WH7803), this protein is 3-phosphoshikimate 1-carboxyvinyltransferase.